The chain runs to 92 residues: Putative transcription elongation factor S-II-like protein 81R (92 aa).

The segment at 51-91 adopts a TFIIS-type zinc-finger fold; that stretch reads GTVKCPGCGSRRVHALQRQTRSADEPMTLFAMCSECGKRWT. Positions 55, 58, 83, and 86 each coordinate Zn(2+).

The protein is Putative transcription elongation factor S-II-like protein 81R of Dryophytes versicolor (chameleon treefrog).